The sequence spans 351 residues: Protein RecA (351 aa).

67 to 74 (GPESSGKT) serves as a coordination point for ATP.

This sequence belongs to the RecA family.

The protein localises to the cytoplasm. Can catalyze the hydrolysis of ATP in the presence of single-stranded DNA, the ATP-dependent uptake of single-stranded DNA by duplex DNA, and the ATP-dependent hybridization of homologous single-stranded DNAs. It interacts with LexA causing its activation and leading to its autocatalytic cleavage. The polypeptide is Protein RecA (Arthrobacter sp. (strain FB24)).